The chain runs to 399 residues: S-adenosylmethionine synthase (399 aa).

An ATP-binding site is contributed by histidine 15. Aspartate 17 lines the Mg(2+) pocket. A K(+)-binding site is contributed by glutamate 43. Residues glutamate 56 and glutamine 99 each coordinate L-methionine. The flexible loop stretch occupies residues 99–109; it reads QSADIAQGVDN. Residues 174 to 176, 244 to 245, aspartate 253, 259 to 260, alanine 276, and lysine 280 contribute to the ATP site; these read DGK, RF, and RK. Aspartate 253 serves as a coordination point for L-methionine. Residue lysine 284 coordinates L-methionine.

It belongs to the AdoMet synthase family. In terms of assembly, homotetramer; dimer of dimers. The cofactor is Mg(2+). Requires K(+) as cofactor.

The protein resides in the cytoplasm. The enzyme catalyses L-methionine + ATP + H2O = S-adenosyl-L-methionine + phosphate + diphosphate. It functions in the pathway amino-acid biosynthesis; S-adenosyl-L-methionine biosynthesis; S-adenosyl-L-methionine from L-methionine: step 1/1. Catalyzes the formation of S-adenosylmethionine (AdoMet) from methionine and ATP. The overall synthetic reaction is composed of two sequential steps, AdoMet formation and the subsequent tripolyphosphate hydrolysis which occurs prior to release of AdoMet from the enzyme. The sequence is that of S-adenosylmethionine synthase from Salinispora tropica (strain ATCC BAA-916 / DSM 44818 / JCM 13857 / NBRC 105044 / CNB-440).